Consider the following 613-residue polypeptide: Laccase 1 (613 aa).

Residues 1–20 (MSSSVRLLLIVALLYTNSWA) form the signal peptide. Plastocyanin-like domains are found at residues 29 to 142 (ITWE…IRPK), 171 to 359 (YLVV…MRVP), and 468 to 598 (DATC…ILDG). N-linked (GlcNAc...) asparagine glycosylation is present at asparagine 74. Cu cation contacts are provided by histidine 78, histidine 80, histidine 122, and histidine 124. N-linked (GlcNAc...) asparagine glycans are attached at residues asparagine 256, asparagine 279, and asparagine 484. The Cu cation site is built by histidine 506, histidine 509, and histidine 511. Residue asparagine 526 is glycosylated (N-linked (GlcNAc...) asparagine). Cu cation is bound by residues histidine 580, cysteine 581, histidine 582, and histidine 586.

Belongs to the multicopper oxidase family. The cofactor is Cu cation.

The protein localises to the cell surface. It functions in the pathway pigment biosynthesis. In terms of biological role, laccase; part of the Pks1 gene cluster that mediates the biosynthesis of an anthraquinone derivative pigment that contributes to conidial pigmentation that provides protection from UV radiation, heat and cold stress. The polyketide synthase Pks1 produces 1-acetyl-2,4,6,8-tetrahydroxy-9,10-anthraquinone though condensation of acetyl-CoA with malonyl-CoA. The dehydratase EthD and the laccase Mlac1 further convert the anthraquinone derivative into the final conidial pigment. The polypeptide is Laccase 1 (Metarhizium acridum (strain CQMa 102)).